The primary structure comprises 724 residues: Long-chain-fatty-acid--CoA ligase ACSBG1 (724 aa).

Residues 1–30 (MPRNSGAGYGCPHGDPSMLDSRETPQESRQ) form a disordered region. Over residues 20–30 (DSRETPQESRQ) the composition is skewed to basic and acidic residues. 2 positions are modified to phosphoserine: Ser-53 and Ser-56. Residues 282–290 (TSGTTGNPK), 472–477 (AGYGLS), Asp-550, and Arg-565 each bind ATP. Tyr-658 carries the post-translational modification Phosphotyrosine. Lys-701 lines the ATP pocket.

This sequence belongs to the ATP-dependent AMP-binding enzyme family. Bubblegum subfamily. Expressed primarily in brain. Expressed at lower level in testis and adrenal gland. Present in all regions of brain except pituitary.

Its subcellular location is the cytoplasm. It is found in the cytoplasmic vesicle. The protein localises to the microsome. The protein resides in the endoplasmic reticulum. It localises to the cell membrane. The catalysed reaction is a long-chain fatty acid + ATP + CoA = a long-chain fatty acyl-CoA + AMP + diphosphate. The enzyme catalyses (E)-hexadec-2-enoate + ATP + CoA = (2E)-hexadecenoyl-CoA + AMP + diphosphate. It catalyses the reaction hexadecanoate + ATP + CoA = hexadecanoyl-CoA + AMP + diphosphate. Catalyzes the conversion of fatty acids such as long-chain and very long-chain fatty acids to their active form acyl-CoAs for both synthesis of cellular lipids, and degradation via beta-oxidation. Can activate diverse saturated, monosaturated and polyunsaturated fatty acids. The protein is Long-chain-fatty-acid--CoA ligase ACSBG1 of Homo sapiens (Human).